We begin with the raw amino-acid sequence, 684 residues long: Protein SEEDLING PLASTID DEVELOPMENT 1 (684 aa).

The transit peptide at 1 to 78 (MRALNSRLVL…FSFDVRSPSS (78 aa)) directs the protein to the chloroplast. The interval 33 to 91 (SDSSSSFRRTRGARQRIASSKSPASSPSPVRRPSDGFSFDVRSPSSDSSISSRKSPTTA) is disordered. Positions 50 to 88 (ASSKSPASSPSPVRRPSDGFSFDVRSPSSDSSISSRKSP) are enriched in low complexity. 220-227 (GSPGVGKT) is a binding site for ATP. Positions 651–684 (PRRSTKKTLTSSSPQKSADGSMGTTGTRLPFLKD) are disordered. Residues 657 to 667 (KTLTSSSPQKS) show a composition bias toward low complexity.

Belongs to the ycf45 family.

It is found in the plastid. The protein localises to the chloroplast membrane. Its subcellular location is the chloroplast envelope. In terms of biological role, required during eoplast (a highly reduced plastid type present during the degreening and dehydration stages of seed maturation) development in embryos and early stages of eoplast redifferentiation during seedling growth. This Arabidopsis thaliana (Mouse-ear cress) protein is Protein SEEDLING PLASTID DEVELOPMENT 1.